The following is a 118-amino-acid chain: D-dopachrome decarboxylase (118 aa).

P2 is subject to N-acetylproline. K33 carries the N6-acetyllysine modification. S90 carries the post-translational modification Phosphoserine.

It belongs to the MIF family. Homotrimer.

It is found in the cytoplasm. It catalyses the reaction D-dopachrome + H(+) = 5,6-dihydroxyindole + CO2. In terms of biological role, tautomerization of D-dopachrome with decarboxylation to give 5,6-dihydroxyindole (DHI). This Mus musculus (Mouse) protein is D-dopachrome decarboxylase (Ddt).